Consider the following 149-residue polypeptide: 3-dehydroquinate dehydratase (149 aa).

Residue Tyr-21 is the Proton acceptor of the active site. Substrate-binding residues include Asn-73, His-79, and Asp-86. His-99 functions as the Proton donor in the catalytic mechanism. Substrate contacts are provided by residues 100-101 (LT) and Arg-110.

Belongs to the type-II 3-dehydroquinase family. As to quaternary structure, homododecamer.

It carries out the reaction 3-dehydroquinate = 3-dehydroshikimate + H2O. Its pathway is metabolic intermediate biosynthesis; chorismate biosynthesis; chorismate from D-erythrose 4-phosphate and phosphoenolpyruvate: step 3/7. Catalyzes a trans-dehydration via an enolate intermediate. The chain is 3-dehydroquinate dehydratase from Thermus thermophilus (strain ATCC BAA-163 / DSM 7039 / HB27).